Consider the following 110-residue polypeptide: Large ribosomal subunit protein uL22 (110 aa).

Belongs to the universal ribosomal protein uL22 family. Part of the 50S ribosomal subunit.

In terms of biological role, this protein binds specifically to 23S rRNA; its binding is stimulated by other ribosomal proteins, e.g. L4, L17, and L20. It is important during the early stages of 50S assembly. It makes multiple contacts with different domains of the 23S rRNA in the assembled 50S subunit and ribosome. Functionally, the globular domain of the protein is located near the polypeptide exit tunnel on the outside of the subunit, while an extended beta-hairpin is found that lines the wall of the exit tunnel in the center of the 70S ribosome. The chain is Large ribosomal subunit protein uL22 from Oleidesulfovibrio alaskensis (strain ATCC BAA-1058 / DSM 17464 / G20) (Desulfovibrio alaskensis).